Here is a 260-residue protein sequence, read N- to C-terminus: Coiled-coil domain-containing protein 127 (260 aa).

Residues 76–139 adopt a coiled-coil conformation; it reads AVISEHRRAV…EKSRLQPLRN (64 aa).

The sequence is that of Coiled-coil domain-containing protein 127 (Ccdc127) from Mus musculus (Mouse).